The following is an 833-amino-acid chain: Glycerol-3-phosphate acyltransferase (833 aa).

The HXXXXD motif motif lies at 310-315 (HRSHID).

This sequence belongs to the GPAT/DAPAT family.

The protein resides in the cell inner membrane. The enzyme catalyses sn-glycerol 3-phosphate + an acyl-CoA = a 1-acyl-sn-glycero-3-phosphate + CoA. The protein operates within phospholipid metabolism; CDP-diacylglycerol biosynthesis; CDP-diacylglycerol from sn-glycerol 3-phosphate: step 1/3. In Pseudomonas syringae pv. tomato (strain ATCC BAA-871 / DC3000), this protein is Glycerol-3-phosphate acyltransferase.